A 275-amino-acid polypeptide reads, in one-letter code: Subtilisin (275 aa).

Gln-2 is a binding site for Ca(2+). The region spanning 5–274 (PYGISQIKAP…KGLINVQAAA (270 aa)) is the Peptidase S8 domain. The Charge relay system role is filled by Asp-32. Asp-41 contributes to the Ca(2+) binding site. His-64 functions as the Charge relay system in the catalytic mechanism. Positions 75, 77, 79, 81, 169, 171, and 174 each coordinate Ca(2+). The active-site Charge relay system is Ser-221.

The protein belongs to the peptidase S8 family. Ca(2+) is required as a cofactor.

It is found in the secreted. It catalyses the reaction Hydrolysis of proteins with broad specificity for peptide bonds, and a preference for a large uncharged residue in P1. Hydrolyzes peptide amides.. Functionally, subtilisin is an extracellular alkaline serine protease, it catalyzes the hydrolysis of proteins and peptide amides. The chain is Subtilisin (apr) from Bacillus pumilus (Bacillus mesentericus).